The primary structure comprises 810 residues: Fibroblast growth factor receptor 1-A (810 aa).

Residues 1 to 26 (MKMMMIMKTTLLLISVLLTQALQSQG) form the signal peptide. At 27–363 (RPAIQDEAPA…TQLPNQTYLE (337 aa)) the chain is on the extracellular side. Ig-like C2-type domains are found at residues 28 to 115 (PAIQ…FNIS), 147 to 235 (PDKM…YQLD), and 244 to 346 (PILQ…AWLT). Cysteine 53 and cysteine 99 are oxidised to a cystine. Residues asparagine 107, asparagine 113, asparagine 216, asparagine 229, asparagine 253, asparagine 285, asparagine 306, asparagine 319, and asparagine 358 are each glycosylated (N-linked (GlcNAc...) asparagine). The cysteines at positions 167 and 219 are disulfide-linked. Cysteine 266 and cysteine 330 are disulfide-bonded. A helical membrane pass occupies residues 364-384 (VLIYCVGFFLICVMVGTAVLA). The Cytoplasmic portion of the chain corresponds to 385 to 810 (KMHSSAKKSD…PNRGVAFKKR (426 aa)). Phosphotyrosine; by autocatalysis is present on tyrosine 450. The Protein kinase domain maps to 465 to 754 (LVLGKPLGEG…LSMTSNQEYL (290 aa)). ATP is bound by residues 471–477 (LGEGCFG), lysine 501, 549–551 (EFA), and asparagine 555. Phosphotyrosine; by autocatalysis is present on residues tyrosine 570 and tyrosine 572. Aspartate 610 serves as the catalytic Proton acceptor. Residues arginine 614 and aspartate 628 each coordinate ATP. Phosphotyrosine; by autocatalysis is present on residues tyrosine 640, tyrosine 641, tyrosine 717, and tyrosine 753. The tract at residues 787-810 (AGADEPCLPKFPPHPNRGVAFKKR) is disordered.

It belongs to the protein kinase superfamily. Tyr protein kinase family. Fibroblast growth factor receptor subfamily. As to quaternary structure, monomer. Homodimer after ligand binding. Interacts with cnpy1. Post-translationally, autophosphorylated. Binding of FGF family members together with heparan sulfate proteoglycan or heparin promotes receptor dimerization and autophosphorylation on tyrosine residues. Autophosphorylation occurs in trans between the two FGFR molecules present in the dimer and proceeds in a highly ordered manner. Phosphotyrosine residues provide docking sites for interacting proteins and so are crucial for FGFR1 function and its regulation. Ubiquitinated. FGFR1 is rapidly ubiquitinated after autophosphorylation, leading to internalization and degradation. In terms of processing, N-glycosylated in the endoplasmic reticulum. The N-glycan chains undergo further maturation to an Endo H-resistant form in the Golgi apparatus. In terms of tissue distribution, initially expressed in adaxial mesoderm with transcripts distinctly localized to the anterior portion of each half-somite. Hereupon, also strongly expressed in the otic vesicles, branchial arches and the brain, especially at the midbrain-hindbrain boundary (MHB).

The protein localises to the cell membrane. The protein resides in the nucleus. It is found in the cytoplasm. Its subcellular location is the cytosol. It localises to the cytoplasmic vesicle. The enzyme catalyses L-tyrosyl-[protein] + ATP = O-phospho-L-tyrosyl-[protein] + ADP + H(+). Present in an inactive conformation in the absence of bound ligand. Ligand binding leads to dimerization and activation by sequential autophosphorylation on tyrosine residues. Tyrosine-protein kinase that acts as a cell-surface receptor for fibroblast growth factors and plays an essential role in the regulation of embryonic development, cell proliferation, differentiation and migration. Required for normal mesoderm patterning and normal skeletogenesis. Phosphorylates PLCG1, FRS2, GAB1 and SHB. Ligand binding leads to the activation of several signaling cascades. Activation of PLCG1 leads to the production of the cellular signaling molecules diacylglycerol and inositol-1,4,5-trisphosphate. Phosphorylation of FRS2 triggers recruitment of GRB2, GAB1, PIK3R1 and SOS1, and mediates activation of RAS, MAPK1/ERK2, MAPK3/ERK1 and the MAP kinase signaling pathway, as well as of the AKT1 signaling pathway. Promotes phosphorylation of SHC1, STAT1 and PTPN11/SHP2. In the nucleus, enhances RPS6KA1 and CREB1 activity and contributes to the regulation of transcription. FGFR1 signaling is down-regulated by ubiquitination, internalization and degradation. In Danio rerio (Zebrafish), this protein is Fibroblast growth factor receptor 1-A (fgfr1a).